The chain runs to 450 residues: Bifunctional protein GlmU (450 aa).

The tract at residues 1-229 is pyrophosphorylase; sequence MRRHAIILAA…VEEIMGVNDR (229 aa). Residues 8-11, Lys22, Gln72, and 77-78 contribute to the UDP-N-acetyl-alpha-D-glucosamine site; these read LAAG and GT. Asp102 contacts Mg(2+). 3 residues coordinate UDP-N-acetyl-alpha-D-glucosamine: Gly139, Glu154, and Asn227. Position 227 (Asn227) interacts with Mg(2+). The interval 230-250 is linker; the sequence is VMLSQAEKAMQRRTNHYHMLN. The interval 251–450 is N-acetyltransferase; that stretch reads GVTIIDPDST…RQTTKEGYRK (200 aa). The UDP-N-acetyl-alpha-D-glucosamine site is built by Arg332 and Lys350. His362 (proton acceptor) is an active-site residue. Tyr365 and Asn376 together coordinate UDP-N-acetyl-alpha-D-glucosamine. Acetyl-CoA is bound by residues 385-386, Ala422, and Arg439; that span reads NY.

This sequence in the N-terminal section; belongs to the N-acetylglucosamine-1-phosphate uridyltransferase family. The protein in the C-terminal section; belongs to the transferase hexapeptide repeat family. In terms of assembly, homotrimer. Mg(2+) is required as a cofactor.

The protein resides in the cytoplasm. The enzyme catalyses alpha-D-glucosamine 1-phosphate + acetyl-CoA = N-acetyl-alpha-D-glucosamine 1-phosphate + CoA + H(+). The catalysed reaction is N-acetyl-alpha-D-glucosamine 1-phosphate + UTP + H(+) = UDP-N-acetyl-alpha-D-glucosamine + diphosphate. The protein operates within nucleotide-sugar biosynthesis; UDP-N-acetyl-alpha-D-glucosamine biosynthesis; N-acetyl-alpha-D-glucosamine 1-phosphate from alpha-D-glucosamine 6-phosphate (route II): step 2/2. Its pathway is nucleotide-sugar biosynthesis; UDP-N-acetyl-alpha-D-glucosamine biosynthesis; UDP-N-acetyl-alpha-D-glucosamine from N-acetyl-alpha-D-glucosamine 1-phosphate: step 1/1. It functions in the pathway bacterial outer membrane biogenesis; LPS lipid A biosynthesis. Its function is as follows. Catalyzes the last two sequential reactions in the de novo biosynthetic pathway for UDP-N-acetylglucosamine (UDP-GlcNAc). The C-terminal domain catalyzes the transfer of acetyl group from acetyl coenzyme A to glucosamine-1-phosphate (GlcN-1-P) to produce N-acetylglucosamine-1-phosphate (GlcNAc-1-P), which is converted into UDP-GlcNAc by the transfer of uridine 5-monophosphate (from uridine 5-triphosphate), a reaction catalyzed by the N-terminal domain. This Staphylococcus aureus (strain USA300) protein is Bifunctional protein GlmU.